Here is a 469-residue protein sequence, read N- to C-terminus: ATP synthase subunit beta (469 aa).

156–163 (GGAGVGKT) contributes to the ATP binding site.

It belongs to the ATPase alpha/beta chains family. In terms of assembly, F-type ATPases have 2 components, CF(1) - the catalytic core - and CF(0) - the membrane proton channel. CF(1) has five subunits: alpha(3), beta(3), gamma(1), delta(1), epsilon(1). CF(0) has three main subunits: a(1), b(2) and c(9-12). The alpha and beta chains form an alternating ring which encloses part of the gamma chain. CF(1) is attached to CF(0) by a central stalk formed by the gamma and epsilon chains, while a peripheral stalk is formed by the delta and b chains.

The protein localises to the cell membrane. It catalyses the reaction ATP + H2O + 4 H(+)(in) = ADP + phosphate + 5 H(+)(out). Functionally, produces ATP from ADP in the presence of a proton gradient across the membrane. The catalytic sites are hosted primarily by the beta subunits. This chain is ATP synthase subunit beta, found in Bacillus cereus (strain AH820).